Here is a 226-residue protein sequence, read N- to C-terminus: Glutathione peroxidase 3 (226 aa).

The N-terminal stretch at M1 to G24 is a signal peptide. Residue U73 is part of the active site. Residue U73 is a non-standard amino acid, selenocysteine.

This sequence belongs to the glutathione peroxidase family. Homotetramer. In terms of tissue distribution, secreted in plasma.

It is found in the secreted. It carries out the reaction 2 glutathione + H2O2 = glutathione disulfide + 2 H2O. It catalyses the reaction tert-butyl hydroperoxide + 2 glutathione = tert-butanol + glutathione disulfide + H2O. In terms of biological role, protects cells and enzymes from oxidative damage, by catalyzing the reduction of hydrogen peroxide, lipid peroxides and organic hydroperoxide, by glutathione. This chain is Glutathione peroxidase 3, found in Pongo pygmaeus (Bornean orangutan).